Consider the following 326-residue polypeptide: 3-oxopimeloyl-[acyl-carrier-protein] synthase (326 aa).

Active-site residues include cysteine 115 and histidine 253. Residues 254–258 (QANIR) form an ACP-binding region. Asparagine 283 is a catalytic residue.

The protein belongs to the thiolase-like superfamily. BioZ family.

It catalyses the reaction malonyl-[ACP] + an acyl-CoA + H(+) = a 3-oxoacyl-[ACP] + CO2 + CoA. The enzyme catalyses glutaryl-CoA + malonyl-[ACP] + H(+) = 3-oxo-6-carboxyhexanoyl-[ACP] + CO2 + CoA. The protein operates within cofactor biosynthesis; biotin biosynthesis. In terms of biological role, involved in the formation of the biotin precursor pimeloyl-ACP. Catalyzes the condensation of glutaryl-CoA, an intermediate in lysine degradation, with malonyl-ACP to produce 3-oxopimeloyl-ACP. The sequence is that of 3-oxopimeloyl-[acyl-carrier-protein] synthase from Brucella abortus (strain 2308).